The primary structure comprises 632 residues: Thioredoxin domain-containing protein C959.05c (632 aa).

Residues 1-22 (MKLFLYHFTFIVYYFIISFSYA) form the signal peptide. N-linked (GlcNAc...) asparagine glycans are attached at residues N35, N41, and N140. One can recognise a Thioredoxin domain in the interval 153-284 (SDSSSTDPAF…LLSYSNQVAS (132 aa)). The cysteines at positions 209 and 212 are disulfide-linked. N557 is a glycosylation site (N-linked (GlcNAc...) asparagine). The helical transmembrane segment at 583 to 603 (LIVFNLLIALLILSILTIISA) threads the bilayer.

It belongs to the protein disulfide isomerase family.

Its subcellular location is the endoplasmic reticulum membrane. It catalyses the reaction Catalyzes the rearrangement of -S-S- bonds in proteins.. In terms of biological role, acts as a membrane-bound chaperone in endoplasmic reticulum quality control. Probably facilitates presentation of substrate to membrane-bound components of the degradation machinery. This is Thioredoxin domain-containing protein C959.05c from Schizosaccharomyces pombe (strain 972 / ATCC 24843) (Fission yeast).